The chain runs to 121 residues: Protein yippee-like 5 (121 aa).

Residues 13–110 (RLFSCANCDT…LERALVRESE (98 aa)) form the Yippee domain. Residues Cys-17, Cys-20, Cys-73, and Cys-76 each contribute to the Zn(2+) site. Position 118 is a phosphoserine (Ser-118).

The protein belongs to the yippee family. Identified in the CTLH complex that contains GID4, RANBP9 and/or RANBP10, MKLN1, MAEA, RMND5A (or alternatively its paralog RMND5B), GID8, ARMC8, WDR26 and YPEL5. Within this complex, MAEA, RMND5A (or alternatively its paralog RMND5B), GID8, WDR26, and RANBP9 and/or RANBP10 form the catalytic core, while GID4, MKLN1, ARMC8 and YPEL5 have ancillary roles. Interacts with RANBP9 and RANBP10.

It is found in the nucleus. The protein localises to the cytoplasm. The protein resides in the cytoskeleton. Its subcellular location is the microtubule organizing center. It localises to the centrosome. It is found in the spindle pole. The protein localises to the midbody. Component of the CTLH E3 ubiquitin-protein ligase complex that selectively accepts ubiquitin from UBE2H and mediates ubiquitination and subsequent proteasomal degradation of the transcription factor HBP1. Required for normal cell proliferation. The protein is Protein yippee-like 5 (YPEL5) of Bos taurus (Bovine).